The primary structure comprises 315 residues: Homoserine kinase (315 aa).

97-107 (PPARGLGSSAT) is an ATP binding site.

It belongs to the GHMP kinase family. Homoserine kinase subfamily.

The protein localises to the cytoplasm. It carries out the reaction L-homoserine + ATP = O-phospho-L-homoserine + ADP + H(+). Its pathway is amino-acid biosynthesis; L-threonine biosynthesis; L-threonine from L-aspartate: step 4/5. In terms of biological role, catalyzes the ATP-dependent phosphorylation of L-homoserine to L-homoserine phosphate. This Synechococcus sp. (strain CC9902) protein is Homoserine kinase.